We begin with the raw amino-acid sequence, 210 residues long: Cilia- and flagella-associated protein 418 (210 aa).

The segment at 1–77 (MAKDLDELLD…LINEIFEEPN (77 aa)) is required for interaction with FAM161A. A disordered region spans residues 24–59 (LDLGERPKGGSGGGGTHSGDRNGAQEKDTLRSTETF). The segment covering 41 to 59 (SGDRNGAQEKDTLRSTETF) has biased composition (basic and acidic residues).

In terms of assembly, interacts (via N-terminus) with FAM161A (via central region); the interaction is direct.

The protein localises to the cytoplasm. The protein resides in the photoreceptor inner segment. In terms of biological role, may be involved in photoreceptor outer segment disk morphogenesis. The chain is Cilia- and flagella-associated protein 418 from Rattus norvegicus (Rat).